The following is a 332-amino-acid chain: MSEHAAEHHRDTQNFLTSEPHTTAIEDNKKRQPPKNLADGMIKALRPKQWVKNVLVLAAPLAAGADAIFNQRTIIDVAIAFVVFCFGASAIYLVNDARDVEADREHPTKRFRPIAAGVLPVGMAYGMAVALIALSIGLSFLATDGVALACVIGVYIALQLGYCFGWKHMPVIDIALVSSGFMLRAMAGGVAAGIELSQWFLLVAAFGSLFMASGKRYAEILLHERTGAKIRKSLESYTPTYLRFVWTMAATAVVMSYALWGFDLSQHSTDAGPWYQISMVPFTIAILRYAAGVDTGDGGAPDEVALSDKVLQVLALAWVFCIVMAVYIMPMF.

Residues 1-12 (MSEHAAEHHRDT) show a composition bias toward basic and acidic residues. The disordered stretch occupies residues 1–36 (MSEHAAEHHRDTQNFLTSEPHTTAIEDNKKRQPPKN). The next 2 helical transmembrane spans lie at 50–70 (WVKN…AIFN) and 74–94 (IIDV…IYLV). 2 residues coordinate 5-phospho-alpha-D-ribose 1-diphosphate: lysine 52 and tyrosine 92. Residues asparagine 95 and aspartate 99 each contribute to the Mg(2+) site. A 5-phospho-alpha-D-ribose 1-diphosphate-binding site is contributed by lysine 109. Transmembrane regions (helical) follow at residues 114–134 (IAAG…LIAL) and 146–166 (VALA…CFGW). The 5-phospho-alpha-D-ribose 1-diphosphate site is built by lysine 167 and arginine 184. Transmembrane regions (helical) follow at residues 169–189 (MPVI…MAGG) and 190–210 (VAAG…GSLF). Trans,octa-cis-decaprenyl phosphate is bound at residue lysine 215. The next 3 helical transmembrane spans lie at 244 to 264 (FVWT…GFDL), 273 to 293 (PWYQ…AAGV), and 310 to 330 (VLQV…YIMP).

Belongs to the UbiA prenyltransferase family. DPPR synthase subfamily. Mg(2+) is required as a cofactor.

Its subcellular location is the cell inner membrane. It carries out the reaction trans,octa-cis-decaprenyl phosphate + 5-phospho-alpha-D-ribose 1-diphosphate + H(+) = trans,octa-cis-decaprenylphospho-beta-D-ribofuranose 5-phosphate + diphosphate. Its pathway is cell wall biogenesis; cell wall polysaccharide biosynthesis. In terms of biological role, involved in the biosynthesis of decaprenylphosphoryl arabinose (DPA) a precursor for arabinan synthesis in mycobacterial cell wall biosynthesis. Catalyzes the transfer of a 5-phosphoribosyl residue from phosphoribose diphosphate (PRPP) to decaprenyl phosphate (DP) to form decaprenylphosphoryl-5-phosphoribose (DPPR). This is Decaprenyl-phosphate phosphoribosyltransferase from Corynebacterium glutamicum (strain ATCC 13032 / DSM 20300 / JCM 1318 / BCRC 11384 / CCUG 27702 / LMG 3730 / NBRC 12168 / NCIMB 10025 / NRRL B-2784 / 534).